The primary structure comprises 141 residues: Subtilase cytotoxin subunit B (141 aa).

Residues Met-1–Ala-23 form the signal peptide. Residues Met-33–Ser-35 and Gln-59 each bind N-glycoloyl-alpha-neuraminate. A hydrophobic patch important for binding to SubA region spans residues Tyr-89–Gly-94. Tyr-101 is a binding site for N-glycoloyl-alpha-neuraminate.

As to quaternary structure, forms a complex with SubA with the stoichiometry SubA1:SubB5 (called SubAB5). Each SubB subunit makes different contacts with the single SubA subunit. This subunit alone forms pentamers.

Its subcellular location is the secreted. It localises to the host cytoplasm. The protein localises to the host cytosol. It is found in the host endoplasmic reticulum lumen. Its function is as follows. Receptor-binding subunit of subtilase cytotoxin SubAB5. Required for receptor-binding and thus correct trafficking in the host cell. Has specificity for host glycans terminating in the sialic acid N-glycolyl-alpha-neuraminic acid (Neu5Gc); each subunit in the SubB pentamer binds one Neu5Gc. The protease subunit (SubA) cleaves host BiP/HSPA5, inducing the host endoplasmic reticulum stress response and eventual cell death. Culture supernatant of E.coli expressing both subA and subB are toxic for Vero cells (African green monkey kidney cell line), Chinese hamster ovary cells and Hct-8 cells (human colonic epithelial cell line); the subunits are not toxic individually. Purified SubAB5 is highly toxic, &lt;0.1 pg is able to kill at least 50% of 30'000 Vero cells in a microtiter plate assay after 3 days; no cytotoxicity is seen at 24 hours. Preabsorption with cells expressing a ganglioside GM2 mimic reduced cytotoxicity of SubAB5 by 93% in the Vero cytotoxicity assay. Intraperitoneal injection of 200 ng of purified SubAB5 kills mice; the higher the dose the faster the mice die. Animals injected with purified SubAB5 have microvascular thrombi in the brain and other organs, including the renal tubules and glomeruli. Mice fed E.coli cells expressing cloned SubAB5 experience drastic weight loss and appear ill and lethargic. SubB alone at 2.5 ug/ml causes vacuolation of Vero cells, which requires the V-type ATPase proton pump; treated cells die. Protein synthesis in Vero cells is transiently inhibited by SubAB5; both subunits are required for this effect. Inhibition of protein synthesis is prevented by brefeldin A; cells are arrested in the G1 phase. SubAB5 at 100 ng/ml induced caspase-dependent apoptosis in Vero cells through mitochondrial membrane damage. The protein is Subtilase cytotoxin subunit B of Escherichia coli.